The chain runs to 339 residues: UDP-N-acetylenolpyruvoylglucosamine reductase (339 aa).

The 171-residue stretch at 19-189 (VDVRAQLFAE…LRVRFALNRV (171 aa)) folds into the FAD-binding PCMH-type domain. Residue Arg-166 is part of the active site. Ser-239 serves as the catalytic Proton donor. Glu-335 is a catalytic residue.

It belongs to the MurB family. FAD is required as a cofactor.

The protein localises to the cytoplasm. The enzyme catalyses UDP-N-acetyl-alpha-D-muramate + NADP(+) = UDP-N-acetyl-3-O-(1-carboxyvinyl)-alpha-D-glucosamine + NADPH + H(+). It functions in the pathway cell wall biogenesis; peptidoglycan biosynthesis. Its function is as follows. Cell wall formation. The sequence is that of UDP-N-acetylenolpyruvoylglucosamine reductase from Pseudomonas fluorescens (strain Pf0-1).